Reading from the N-terminus, the 258-residue chain is UPF0246 protein Jann_0444 (258 aa).

It belongs to the UPF0246 family.

In Jannaschia sp. (strain CCS1), this protein is UPF0246 protein Jann_0444.